The chain runs to 178 residues: Inorganic pyrophosphatase (178 aa).

The substrate site is built by Lys30, Arg44, and Tyr56. Residues Asp66, Asp71, and Asp103 each contribute to the Mg(2+) site. Tyr142 lines the substrate pocket.

Belongs to the PPase family. In terms of assembly, homohexamer. The cofactor is Mg(2+).

It localises to the cytoplasm. The enzyme catalyses diphosphate + H2O = 2 phosphate + H(+). Catalyzes the hydrolysis of inorganic pyrophosphate (PPi) forming two phosphate ions. This Xylella fastidiosa (strain 9a5c) protein is Inorganic pyrophosphatase.